The sequence spans 422 residues: PHAF1 protein T01G9.2 (422 aa).

It belongs to the PHAF1 family.

It localises to the cytoplasm. The protein resides in the preautophagosomal structure. May play a regulatory role in autophagic activity. The polypeptide is PHAF1 protein T01G9.2 (Caenorhabditis elegans).